Reading from the N-terminus, the 396-residue chain is Elongation factor Tu 1 (396 aa).

One can recognise a tr-type G domain in the interval 10 to 206; the sequence is KPHVNVGTIG…ALDTYIPTPK (197 aa). Positions 19-26 are G1; sequence GHVDHGKT. A GTP-binding site is contributed by 19-26; it reads GHVDHGKT. Threonine 26 is a Mg(2+) binding site. The tract at residues 60-64 is G2; it reads GITIS. Positions 81–84 are G3; sequence DCPG. GTP contacts are provided by residues 81-85 and 136-139; these read DCPGH and NKAD. Positions 136-139 are G4; sequence NKAD. A G5 region spans residues 174 to 176; that stretch reads SAL.

The protein belongs to the TRAFAC class translation factor GTPase superfamily. Classic translation factor GTPase family. EF-Tu/EF-1A subfamily. As to quaternary structure, monomer.

The protein localises to the cytoplasm. The catalysed reaction is GTP + H2O = GDP + phosphate + H(+). Its function is as follows. GTP hydrolase that promotes the GTP-dependent binding of aminoacyl-tRNA to the A-site of ribosomes during protein biosynthesis. This chain is Elongation factor Tu 1, found in Ruthia magnifica subsp. Calyptogena magnifica.